The sequence spans 102 residues: MNGQNIRIRLKAFDHRILDASTREIVATAKRTGAQVRGPIPLPTRIEKFTVNRSPHIDKKSREQFEMRTHKRLLDIVDPTPQTVDALMKLDLAAGVDVEIKL.

The protein belongs to the universal ribosomal protein uS10 family. As to quaternary structure, part of the 30S ribosomal subunit.

Functionally, involved in the binding of tRNA to the ribosomes. The polypeptide is Small ribosomal subunit protein uS10 (Xanthobacter autotrophicus (strain ATCC BAA-1158 / Py2)).